A 209-amino-acid chain; its full sequence is Ribosomal RNA large subunit methyltransferase E (209 aa).

G63, W65, D83, D99, and D124 together coordinate S-adenosyl-L-methionine. Catalysis depends on K164, which acts as the Proton acceptor.

This sequence belongs to the class I-like SAM-binding methyltransferase superfamily. RNA methyltransferase RlmE family.

The protein resides in the cytoplasm. It catalyses the reaction uridine(2552) in 23S rRNA + S-adenosyl-L-methionine = 2'-O-methyluridine(2552) in 23S rRNA + S-adenosyl-L-homocysteine + H(+). Functionally, specifically methylates the uridine in position 2552 of 23S rRNA at the 2'-O position of the ribose in the fully assembled 50S ribosomal subunit. This is Ribosomal RNA large subunit methyltransferase E from Shewanella amazonensis (strain ATCC BAA-1098 / SB2B).